The primary structure comprises 328 residues: L-lactate dehydrogenase (328 aa).

NAD(+) contacts are provided by residues Val18, Glu39, Lys46, Tyr71, and 85–86 (GA). The substrate site is built by Gln88 and Arg94. NAD(+) is bound by residues Ser107, 124–126 (AAN), and Ser149. 126–129 (NPVD) contacts substrate. 154–157 (DSAR) contacts substrate. Residues Arg159 and His174 each coordinate beta-D-fructose 1,6-bisphosphate. The active-site Proton acceptor is His181. Position 226 is a phosphotyrosine (Tyr226). Thr235 provides a ligand contact to substrate.

This sequence belongs to the LDH/MDH superfamily. LDH family. Homotetramer.

It localises to the cytoplasm. It carries out the reaction (S)-lactate + NAD(+) = pyruvate + NADH + H(+). It participates in fermentation; pyruvate fermentation to lactate; (S)-lactate from pyruvate: step 1/1. With respect to regulation, allosterically activated by fructose 1,6-bisphosphate (FBP). Its function is as follows. Catalyzes the conversion of lactate to pyruvate. The protein is L-lactate dehydrogenase of Streptococcus sanguinis (strain SK36).